We begin with the raw amino-acid sequence, 291 residues long: ATP synthase gamma chain (291 aa).

The protein belongs to the ATPase gamma chain family. F-type ATPases have 2 components, CF(1) - the catalytic core - and CF(0) - the membrane proton channel. CF(1) has five subunits: alpha(3), beta(3), gamma(1), delta(1), epsilon(1). CF(0) has three main subunits: a, b and c.

The protein localises to the cell inner membrane. Its function is as follows. Produces ATP from ADP in the presence of a proton gradient across the membrane. The gamma chain is believed to be important in regulating ATPase activity and the flow of protons through the CF(0) complex. This is ATP synthase gamma chain from Burkholderia pseudomallei (strain 1106a).